The following is a 26-amino-acid chain: Omega-conotoxin TVIA (26 aa).

Cystine bridges form between cysteine 1–cysteine 16, cysteine 8–cysteine 19, and cysteine 15–cysteine 26. Residues proline 4, proline 10, and proline 21 each carry the 4-hydroxyproline modification.

It belongs to the conotoxin O1 superfamily. Expressed by the venom duct.

It localises to the secreted. Functionally, omega-conotoxins act at presynaptic membranes, they bind and block voltage-gated calcium channels (Cav). The sequence is that of Omega-conotoxin TVIA from Conus tulipa (Fish-hunting cone snail).